The primary structure comprises 174 residues: Adenine phosphoribosyltransferase (174 aa).

It belongs to the purine/pyrimidine phosphoribosyltransferase family. In terms of assembly, homodimer.

The protein localises to the cytoplasm. It catalyses the reaction AMP + diphosphate = 5-phospho-alpha-D-ribose 1-diphosphate + adenine. The protein operates within purine metabolism; AMP biosynthesis via salvage pathway; AMP from adenine: step 1/1. Its function is as follows. Catalyzes a salvage reaction resulting in the formation of AMP, that is energically less costly than de novo synthesis. The sequence is that of Adenine phosphoribosyltransferase from Dichelobacter nodosus (strain VCS1703A).